The primary structure comprises 285 residues: MKYIGAHVSAAGGLANAAIRAAEIDATAFALFTKNQRQWRAAPLTTQTIDEFKAACEKYHYTSAQILPHDSYLINLGHPVAEALEKSRDAFIDEMQRCEQLGLSLLNFHPGSHLMQISEEDCLARIAESINIALDKTQGVTAVIENTAGQGSNLGFKFEHLAAIIDGVEDKSRVGVCIDTCHAFAAGYDLRTPAECEKTFADFARIVGFKYLHGMHLNDAKSTFGSRVDRHHSLGEGNIGHDAFRWIMQDDRFDGIPLILETINPDIWAEEIAWLKAQQTEKAVA.

Zn(2+)-binding residues include H69, H109, E145, D179, H182, H216, D229, H231, and E261.

Belongs to the AP endonuclease 2 family. It depends on Zn(2+) as a cofactor.

It catalyses the reaction Endonucleolytic cleavage to 5'-phosphooligonucleotide end-products.. Its function is as follows. Endonuclease IV plays a role in DNA repair. It cleaves phosphodiester bonds at apurinic or apyrimidinic (AP) sites, generating a 3'-hydroxyl group and a 5'-terminal sugar phosphate. In Escherichia coli O1:K1 / APEC, this protein is Probable endonuclease 4.